Reading from the N-terminus, the 405-residue chain is Caspase-1 (405 aa).

Residues 1 to 91 form the CARD domain; it reads MADKVLKEKR…HLAETLRLSS (91 aa). Positions 1–119 are excised as a propeptide; sequence MADKVLKEKR…SSPALQAMPD (119 aa). Active-site residues include histidine 238 and cysteine 286. Positions 299–317 are excised as a propeptide; the sequence is STGTSGNSSSLAPDDFEDD. A Phosphoserine modification is found at serine 303.

Belongs to the peptidase C14A family. In terms of assembly, heterotetramer that consists of two anti-parallel arranged heterodimers, each one formed by a 20 kDa (Caspase-1 subunit p20) and a 10 kDa (Caspase-1 subunit p10) subunit. May be a component of the inflammasome, a protein complex which also includes PYCARD, CARD8 and NLRP2 and whose function would be the activation of pro-inflammatory caspases. Component of the AIM2 PANoptosome complex, a multiprotein complex that drives inflammatory cell death (PANoptosis). Both the p10 and p20 subunits interact with MEFV. Interacts with CARD17P/INCA and CARD18. Interacts with SERPINB1; this interaction regulates CASP1 activity. As to quaternary structure, heterotetramer that consists of two anti-parallel arranged heterodimers, each one formed by a 20 kDa (Caspase-1 subunit p20) and a 10 kDa (Caspase-1 subunit p10) subunit. In terms of processing, the two subunits are derived from the precursor sequence by an autocatalytic mechanism. Ubiquitinated via 'Lys-11'-linked polyubiquitination. Deubiquitinated by USP8.

The protein localises to the cytoplasm. The protein resides in the cell membrane. It catalyses the reaction Strict requirement for an Asp residue at position P1 and has a preferred cleavage sequence of Tyr-Val-Ala-Asp-|-.. In terms of biological role, thiol protease involved in a variety of inflammatory processes by proteolytically cleaving other proteins, such as the precursors of the inflammatory cytokines interleukin-1 beta (IL1B) and interleukin 18 (IL18) as well as the pyroptosis inducer Gasdermin-D (GSDMD), into active mature peptides. Plays a key role in cell immunity as an inflammatory response initiator: once activated through formation of an inflammasome complex, it initiates a pro-inflammatory response through the cleavage of the two inflammatory cytokines IL1B and IL18, releasing the mature cytokines which are involved in a variety of inflammatory processes. Cleaves a tetrapeptide after an Asp residue at position P1. Also initiates pyroptosis, a programmed lytic cell death pathway, through cleavage of GSDMD. In contrast to cleavage of interleukin IL1B, recognition and cleavage of GSDMD is not strictly dependent on the consensus cleavage site but depends on an exosite interface on CASP1 that recognizes and binds the Gasdermin-D, C-terminal (GSDMD-CT) part. Cleaves and activates CASP7 in response to bacterial infection, promoting plasma membrane repair. Upon inflammasome activation, during DNA virus infection but not RNA virus challenge, controls antiviral immunity through the cleavage of CGAS, rendering it inactive. In apoptotic cells, cleaves SPHK2 which is released from cells and remains enzymatically active extracellularly. The chain is Caspase-1 (CASP1) from Equus caballus (Horse).